Here is a 666-residue protein sequence, read N- to C-terminus: Long chain acyl-CoA synthetase 4 (666 aa).

228-239 (IMYTSGTTGDPK) contributes to the ATP binding site. The tract at residues 495 to 519 (DGWLHTGDVGEWQPDGSMKIIDRKK) is fatty acid-binding.

The protein belongs to the ATP-dependent AMP-binding enzyme family. It depends on Mg(2+) as a cofactor.

It carries out the reaction a long-chain fatty acid + ATP + CoA = a long-chain fatty acyl-CoA + AMP + diphosphate. It participates in lipid metabolism; fatty acid metabolism. Activation of long-chain fatty acids for both synthesis of cellular lipids, and degradation via beta-oxidation. Preferentially uses palmitate, palmitoleate, oleate and linoleate. This chain is Long chain acyl-CoA synthetase 4 (LACS4), found in Arabidopsis thaliana (Mouse-ear cress).